The primary structure comprises 419 residues: Argininosuccinate synthase (419 aa).

ATP contacts are provided by residues 9-17 (AYSGGLDTS) and A35. Residues Y86 and S91 each contribute to the L-citrulline site. Position 114 to 122 (114 to 122 (AHGATGKGN)) interacts with ATP. T118, N122, and D123 together coordinate L-aspartate. N122 is an L-citrulline binding site. Residues R126, S179, S188, E270, and Y282 each contribute to the L-citrulline site.

This sequence belongs to the argininosuccinate synthase family. Type 1 subfamily. As to quaternary structure, homotetramer.

The enzyme catalyses L-citrulline + L-aspartate + ATP = 2-(N(omega)-L-arginino)succinate + AMP + diphosphate + H(+). It functions in the pathway amino-acid biosynthesis; L-arginine biosynthesis; L-arginine from L-ornithine and carbamoyl phosphate: step 2/3. It participates in nitrogen metabolism; urea cycle; (N(omega)-L-arginino)succinate from L-aspartate and L-citrulline: step 1/1. In Drosophila melanogaster (Fruit fly), this protein is Argininosuccinate synthase.